The sequence spans 88 residues: PTS system cellobiose-specific EIIB component (88 aa).

The 86-residue stretch at 3–88 folds into the PTS EIIB type-3 domain; sequence KKRIYLFCSA…IDTLLYGKVD (86 aa). Cys-10 acts as the Phosphocysteine intermediate in catalysis. Position 10 is a phosphocysteine; by EIIA (Cys-10).

It localises to the cytoplasm. It carries out the reaction D-cellobiose(out) + N(pros)-phospho-L-histidyl-[protein] = 6-phospho-beta-D-glucosyl-(1-&gt;4)-D-glucose(in) + L-histidyl-[protein]. Its function is as follows. The phosphoenolpyruvate-dependent sugar phosphotransferase system (sugar PTS), a major carbohydrate active transport system, catalyzes the phosphorylation of incoming sugar substrates concomitantly with their translocation across the cell membrane. The enzyme II CelABD PTS system is involved in cellobiose transport. The polypeptide is PTS system cellobiose-specific EIIB component (Aeromonas hydrophila).